We begin with the raw amino-acid sequence, 98 residues long: MDARDIILRPVITEKSADLMDSKKYTFDVALTATKLQVRDAIEEIFDVKVKSVNIMNVRGKEKRVGRYTGKIARRRKAIVALTEDSNDIKIFKDENNE.

The protein belongs to the universal ribosomal protein uL23 family. In terms of assembly, part of the 50S ribosomal subunit. Contacts protein L29, and trigger factor when it is bound to the ribosome.

Its function is as follows. One of the early assembly proteins it binds 23S rRNA. One of the proteins that surrounds the polypeptide exit tunnel on the outside of the ribosome. Forms the main docking site for trigger factor binding to the ribosome. The polypeptide is Large ribosomal subunit protein uL23 (Lactobacillus delbrueckii subsp. bulgaricus (strain ATCC 11842 / DSM 20081 / BCRC 10696 / JCM 1002 / NBRC 13953 / NCIMB 11778 / NCTC 12712 / WDCM 00102 / Lb 14)).